The primary structure comprises 326 residues: tRNA-modifying protein YgfZ (326 aa).

The folate site is built by W27 and W189.

Belongs to the tRNA-modifying YgfZ family.

Its subcellular location is the cytoplasm. In terms of biological role, folate-binding protein involved in regulating the level of ATP-DnaA and in the modification of some tRNAs. It is probably a key factor in regulatory networks that act via tRNA modification, such as initiation of chromosomal replication. This chain is tRNA-modifying protein YgfZ, found in Salmonella paratyphi A (strain AKU_12601).